A 130-amino-acid polypeptide reads, in one-letter code: UPF0102 protein RPE_0358 (130 aa).

Belongs to the UPF0102 family.

The polypeptide is UPF0102 protein RPE_0358 (Rhodopseudomonas palustris (strain BisA53)).